The sequence spans 949 residues: Glycine dehydrogenase (decarboxylating) (949 aa).

An N6-(pyridoxal phosphate)lysine modification is found at K704.

It belongs to the GcvP family. As to quaternary structure, the glycine cleavage system is composed of four proteins: P, T, L and H. Requires pyridoxal 5'-phosphate as cofactor.

The enzyme catalyses N(6)-[(R)-lipoyl]-L-lysyl-[glycine-cleavage complex H protein] + glycine + H(+) = N(6)-[(R)-S(8)-aminomethyldihydrolipoyl]-L-lysyl-[glycine-cleavage complex H protein] + CO2. In terms of biological role, the glycine cleavage system catalyzes the degradation of glycine. The P protein binds the alpha-amino group of glycine through its pyridoxal phosphate cofactor; CO(2) is released and the remaining methylamine moiety is then transferred to the lipoamide cofactor of the H protein. This Bacteroides thetaiotaomicron (strain ATCC 29148 / DSM 2079 / JCM 5827 / CCUG 10774 / NCTC 10582 / VPI-5482 / E50) protein is Glycine dehydrogenase (decarboxylating).